A 269-amino-acid polypeptide reads, in one-letter code: MQRIYLLSDATGETVERVVRAALTQFKNVDVKLHRMSRLRTREDISLALDEAAKQPGVIFYTLVDNVLAQYLHNEANLRELEAIDLITPLLFKLASLLGIPPQKEPGLLYQLNTEYYKRMEAVDFTVKQDDGQEPRNLYKADIVLVGVSRTSKTPLSMYLAHKGYKVANVPIVLGIEPPKELYQVEKIRVVGLIIDAKRLVDIRSARLRNMRQSPRGSYADYQRVEEELDYCRKLYRKHPDWQVIDVTNKSVEESAAEILKRYDEGFPD.

Position 147–154 (147–154 (GVSRTSKT)) interacts with ADP.

Belongs to the pyruvate, phosphate/water dikinase regulatory protein family. PDRP subfamily.

The enzyme catalyses N(tele)-phospho-L-histidyl/L-threonyl-[pyruvate, phosphate dikinase] + ADP = N(tele)-phospho-L-histidyl/O-phospho-L-threonyl-[pyruvate, phosphate dikinase] + AMP + H(+). It carries out the reaction N(tele)-phospho-L-histidyl/O-phospho-L-threonyl-[pyruvate, phosphate dikinase] + phosphate + H(+) = N(tele)-phospho-L-histidyl/L-threonyl-[pyruvate, phosphate dikinase] + diphosphate. Bifunctional serine/threonine kinase and phosphorylase involved in the regulation of the pyruvate, phosphate dikinase (PPDK) by catalyzing its phosphorylation/dephosphorylation. In Geotalea uraniireducens (strain Rf4) (Geobacter uraniireducens), this protein is Putative pyruvate, phosphate dikinase regulatory protein.